Here is a 492-residue protein sequence, read N- to C-terminus: Protein nucleotidyltransferase YdiU (492 aa).

ATP is bound by residues G95, G97, R98, K118, D130, G131, R181, and R188. D257 acts as the Proton acceptor in catalysis. Mg(2+)-binding residues include N258 and D267. D267 lines the ATP pocket. Residues 466–475 (YDDQPEHAEY) show a composition bias toward basic and acidic residues. Residues 466 to 492 (YDDQPEHAEYRQPPPPSEKPYQTFCGT) are disordered.

It belongs to the SELO family. Requires Mg(2+) as cofactor. Mn(2+) is required as a cofactor.

The enzyme catalyses L-seryl-[protein] + ATP = 3-O-(5'-adenylyl)-L-seryl-[protein] + diphosphate. It catalyses the reaction L-threonyl-[protein] + ATP = 3-O-(5'-adenylyl)-L-threonyl-[protein] + diphosphate. It carries out the reaction L-tyrosyl-[protein] + ATP = O-(5'-adenylyl)-L-tyrosyl-[protein] + diphosphate. The catalysed reaction is L-histidyl-[protein] + UTP = N(tele)-(5'-uridylyl)-L-histidyl-[protein] + diphosphate. The enzyme catalyses L-seryl-[protein] + UTP = O-(5'-uridylyl)-L-seryl-[protein] + diphosphate. It catalyses the reaction L-tyrosyl-[protein] + UTP = O-(5'-uridylyl)-L-tyrosyl-[protein] + diphosphate. Functionally, nucleotidyltransferase involved in the post-translational modification of proteins. It can catalyze the addition of adenosine monophosphate (AMP) or uridine monophosphate (UMP) to a protein, resulting in modifications known as AMPylation and UMPylation. The protein is Protein nucleotidyltransferase YdiU of Syntrophotalea carbinolica (strain DSM 2380 / NBRC 103641 / GraBd1) (Pelobacter carbinolicus).